Here is a 335-residue protein sequence, read N- to C-terminus: Expansin-like protein 3 (335 aa).

The first 20 residues, 1 to 20 (MKFNTIFLVLSIVKFILISA), serve as a signal peptide directing secretion. At 21–314 (QSCPFSQSII…LNENENIESN (294 aa)) the chain is on the extracellular side. The Expansin-like EG45 domain occupies 43-143 (AGNCGFEKLN…VKVPCEVSGN (101 aa)). 2 disulfides stabilise this stretch: cysteine 46–cysteine 76 and cysteine 79–cysteine 138. A glycan (N-linked (GlcNAc...) asparagine) is linked at asparagine 87. Positions 247-276 (YKPQTFNSQQTSNNQNSNTQTPTKQPSPNS) are disordered. The segment covering 249–272 (PQTFNSQQTSNNQNSNTQTPTKQP) has biased composition (low complexity). The chain crosses the membrane as a helical span at residues 315–335 (SLKLLPNFLLLILIILLNINF).

This sequence belongs to the expansin family. Expansin A subfamily.

It localises to the membrane. May serve to lubricate the movement of the cellulose microfibrils during cell growth and wall extension and/or may serve to maintain the fluid state of the slug cell wall. The chain is Expansin-like protein 3 (expl3) from Dictyostelium discoideum (Social amoeba).